The sequence spans 483 residues: UDP-N-acetylmuramoyl-L-alanyl-D-glutamate--2,6-diaminopimelate ligase (483 aa).

Serine 30 provides a ligand contact to UDP-N-acetyl-alpha-D-muramoyl-L-alanyl-D-glutamate. 109–115 contacts ATP; the sequence is GTNGKTT. Residues 151-152, serine 178, and arginine 186 each bind UDP-N-acetyl-alpha-D-muramoyl-L-alanyl-D-glutamate; that span reads TT. Residue lysine 218 is modified to N6-carboxylysine. Meso-2,6-diaminopimelate contacts are provided by residues arginine 380, 403 to 406, glycine 453, and glutamate 457; that span reads DNPR. The short motif at 403–406 is the Meso-diaminopimelate recognition motif element; sequence DNPR.

This sequence belongs to the MurCDEF family. MurE subfamily. Mg(2+) is required as a cofactor. In terms of processing, carboxylation is probably crucial for Mg(2+) binding and, consequently, for the gamma-phosphate positioning of ATP.

Its subcellular location is the cytoplasm. It carries out the reaction UDP-N-acetyl-alpha-D-muramoyl-L-alanyl-D-glutamate + meso-2,6-diaminopimelate + ATP = UDP-N-acetyl-alpha-D-muramoyl-L-alanyl-gamma-D-glutamyl-meso-2,6-diaminopimelate + ADP + phosphate + H(+). The protein operates within cell wall biogenesis; peptidoglycan biosynthesis. In terms of biological role, catalyzes the addition of meso-diaminopimelic acid to the nucleotide precursor UDP-N-acetylmuramoyl-L-alanyl-D-glutamate (UMAG) in the biosynthesis of bacterial cell-wall peptidoglycan. This is UDP-N-acetylmuramoyl-L-alanyl-D-glutamate--2,6-diaminopimelate ligase from Chlamydia caviae (strain ATCC VR-813 / DSM 19441 / 03DC25 / GPIC) (Chlamydophila caviae).